Here is a 135-residue protein sequence, read N- to C-terminus: Hemoglobin subunit beta-2 (135 aa).

The 134-residue stretch at 2 to 135 (HWTAEEKALV…VVDALSKGYH (134 aa)) folds into the Globin domain. Heme b is bound by residues H57 and H81.

This sequence belongs to the globin family. As to quaternary structure, hb 2 is a heterotetramer of two alpha and two beta-2 chains. As to expression, red blood cells (at protein level).

Involved in oxygen transport from gills to the various peripheral tissues. The protein is Hemoglobin subunit beta-2 of Somniosus microcephalus (Greenland sleeper shark).